A 380-amino-acid chain; its full sequence is Actinidain (380 aa).

The signal sequence occupies residues 1–24 (MGLPKSFVSMSLLFFSTLLILSLA). Residues 25 to 126 (FNAKNLTQRT…NQYEPRVGQV (102 aa)) constitute a propeptide, activation peptide. 3 cysteine pairs are disulfide-bonded: Cys148-Cys191, Cys182-Cys224, and Cys282-Cys332. Cys151 is a catalytic residue. Position 151 (Cys151) interacts with E64. Catalysis depends on residues His288 and Asn308.

It belongs to the peptidase C1 family. As to expression, fruit.

The catalysed reaction is Specificity close to that of papain.. With respect to regulation, repressed by the active-site-directed cysteine protease inhibitor E64 (L-trans-epoxysuccinyl-leucylamide-(4-guanido)-butane) produced by Aspergillus japonicus. Its function is as follows. Cysteine protease responsible for the cleavage of kiwellin into kissper and KiTH. In Actinidia chinensis var. chinensis (Chinese soft-hair kiwi), this protein is Actinidain.